Reading from the N-terminus, the 629-residue chain is tRNA uridine 5-carboxymethylaminomethyl modification enzyme MnmG (629 aa).

FAD contacts are provided by residues 13–18, Val-125, and Ser-180; that span reads GGGHAG. 273-287 lines the NAD(+) pocket; sequence GPRYCPSIEDKVMRF. Gln-370 provides a ligand contact to FAD.

The protein belongs to the MnmG family. As to quaternary structure, homodimer. Heterotetramer of two MnmE and two MnmG subunits. FAD serves as cofactor.

The protein localises to the cytoplasm. In terms of biological role, NAD-binding protein involved in the addition of a carboxymethylaminomethyl (cmnm) group at the wobble position (U34) of certain tRNAs, forming tRNA-cmnm(5)s(2)U34. This chain is tRNA uridine 5-carboxymethylaminomethyl modification enzyme MnmG, found in Enterobacter sp. (strain 638).